We begin with the raw amino-acid sequence, 139 residues long: Maximins 4/H3 type 7 (139 aa).

A signal peptide spans 1-18 (MNFKYIVAVSFLIASAYA). Residues 19–43 (RSVQNDEQSLSQRDVLEEESLREIR) constitute a propeptide that is removed on maturation. Asn70 carries the post-translational modification Asparagine amide. Positions 74–118 (TAEDHEVMKRLEAIMRDLDSLDYPEEASERETRGFNQDEIAKEKR) are excised as a propeptide. Residue Ile138 is modified to Isoleucine amide.

Belongs to the bombinin family. Expressed by the skin glands.

It localises to the secreted. Functionally, maximin-4 shows antibacterial activity against both Gram-positive and Gram-negative bacteria. It also shows antimicrobial activity against the fungus C.albicans, but not against A.flavus nor P.uticale. It has little hemolytic activity. It does not possess a significant cytotoxicity against tumor cell lines. It does not possess a significant anti-HIV activity. In terms of biological role, maximin-H3 shows antibacterial activity against both Gram-positive and Gram-negative bacteria. It also shows antimicrobial activity against the fungus C.albicans. Shows strong hemolytic activity. The sequence is that of Maximins 4/H3 type 7 from Bombina maxima (Giant fire-bellied toad).